A 118-amino-acid polypeptide reads, in one-letter code: DNA-binding protein inhibitor ID-3-A (118 aa).

The 53-residue stretch at 32-84 folds into the bHLH domain; that stretch reads SHKGPGMDEPMGLLYDMNGCYSKLKELVPGIPQGSKLSQVEILQHVIDYIFDL.

Homodimer. Heterodimer with other HLH proteins. Interacts (via HLH domain) with the bHLH protein hes4/hairy2 (via Orange domain). Interacts with stat3. At gastrula stage, expressed in all three germ layers, but becomes localized to discrete domains of the developing nervous system during neurulation, including the anterior neural plate, cement gland, eye anlagen, otic placode and both cranial and trunk premigratory and early migratory neural crest cells. Also expressed in the most dorsal and ventral portions of the myotome, the developing heart and anterior blood islets, and in the tail fin mesenchyme. Expressed at a low level in limbs, with expression decreasing as limbs develop, but expressed at a high level in blastemas (regenerated limbs), where expression is localized to both the blastermal epidermis and mesenchyme. Widely expressed in adults including the liver and heart.

Its subcellular location is the nucleus. Its function is as follows. Transcriptional regulator (lacking a basic DNA binding domain) which negatively regulates the basic helix-loop-helix (bHLH) transcription factors by forming heterodimers and inhibiting their DNA binding and transcriptional activity. Influences cell fate decisions in the embryo by sequestering and blocking the activity of the bHLH transcription factors that control these decisions. Inhibits the binding of myogenic bHLH-containing complexes to E-box DNA, thereby preventing activation of muscle-specific target genes. Also inhibits the activity of neurogenic factor neurod1/neuroD. Plays a role in cell cycle progression and survival of neural crest progenitors; binding to either hes4-B/hairy2b or stat3 blocks the formation of transcription factor complexes and the repressor function of hes4-B/hairy2B, to allow neural crest progenitors to differentiate. May play a role in the regulation of the circadian rhythm. This is DNA-binding protein inhibitor ID-3-A (id3-a) from Xenopus laevis (African clawed frog).